We begin with the raw amino-acid sequence, 459 residues long: Elongation factor 1-alpha 1 (459 aa).

The tr-type G domain maps to 5–242 (KTHINIVVIG…DCIIPPQRPT (238 aa)). Residues 14-21 (GHVDSGKS) form a G1 region. Residues 70–74 (GITID) form a G2 region. A G3 region spans residues 91–94 (DAPG). The G4 stretch occupies residues 153 to 156 (NKMD). Positions 194 to 196 (SGF) are G5. A 5-glutamyl glycerylphosphorylethanolamine mark is found at Glu301 and Glu374.

This sequence belongs to the TRAFAC class translation factor GTPase superfamily. Classic translation factor GTPase family. EF-Tu/EF-1A subfamily.

Its subcellular location is the cytoplasm. In terms of biological role, this protein promotes the GTP-dependent binding of aminoacyl-tRNA to the A-site of ribosomes during protein biosynthesis. This chain is Elongation factor 1-alpha 1 (eft-1), found in Oscheius tipulae.